The following is a 290-amino-acid chain: Poly-beta-1,6-N-acetyl-D-glucosamine N-deacetylase (290 aa).

The first 28 residues, 1–28, serve as a signal peptide directing secretion; sequence MKYRKFIILVLSILIILPVSTLDGHHIA. Residues 114-290 form the NodB homology domain; the sequence is RSVWINFDDM…KRWDGFHEKD (177 aa).

The protein belongs to the polysaccharide deacetylase family.

It localises to the secreted. Its subcellular location is the cell wall. In terms of biological role, catalyzes the N-deacetylation of poly-beta-1,6-N-acetyl-D-glucosamine (PNAG, also referred to as PIA), a biofilm adhesin polysaccharide. N-deacetylation is crucial for attachment of the polysaccharide to the bacterial cell surface; it leads to the introduction of positive charges in the otherwise neutral PIA polymer, allowing electrostatic interactions. This Staphylococcus aureus (strain NCTC 8325 / PS 47) protein is Poly-beta-1,6-N-acetyl-D-glucosamine N-deacetylase (icaB).